The primary structure comprises 386 residues: ATP synthase gamma chain 2, chloroplastic (386 aa).

Positions 1 to 22 (MTGSISTSWLLSSPSNSNSASS) are disordered. The transit peptide at 1-60 (MTGSISTSWLLSSPSNSNSASSSESYSFIATLKPVRYYPFQSLTPNRISSRSPLPSIQIR) directs the protein to the chloroplast. The active site involves Cys149. A disulfide bridge links Cys260 with Cys266.

It belongs to the ATPase gamma chain family. F-type ATPases have 2 components, CF(1) - the catalytic core - and CF(0) - the membrane proton channel. CF(1) has five subunits: alpha(3), beta(3), gamma(1), delta(1), epsilon(1). CF(0) has four main subunits: a, b, b' and c.

The protein resides in the plastid. The protein localises to the chloroplast thylakoid membrane. Functionally, produces ATP from ADP in the presence of a proton gradient across the membrane. The gamma chain is believed to be important in regulating ATPase activity and the flow of protons through the CF(0) complex. The polypeptide is ATP synthase gamma chain 2, chloroplastic (ATPC2) (Arabidopsis thaliana (Mouse-ear cress)).